A 444-amino-acid chain; its full sequence is Glutamate--tRNA ligase 2 (444 aa).

A 'HIGH' region motif is present at residues 7–17 (PSPTGYLHVGN). The short motif at 240–244 (KLSKR) is the 'KMSKS' region element. Residue Lys243 coordinates ATP.

This sequence belongs to the class-I aminoacyl-tRNA synthetase family. Glutamate--tRNA ligase type 1 subfamily. In terms of assembly, monomer.

The protein localises to the cytoplasm. The catalysed reaction is tRNA(Glu) + L-glutamate + ATP = L-glutamyl-tRNA(Glu) + AMP + diphosphate. Catalyzes the attachment of glutamate to tRNA(Glu) in a two-step reaction: glutamate is first activated by ATP to form Glu-AMP and then transferred to the acceptor end of tRNA(Glu). This is Glutamate--tRNA ligase 2 from Gluconobacter oxydans (strain 621H) (Gluconobacter suboxydans).